The primary structure comprises 506 residues: ATP synthase subunit alpha (506 aa).

Residue 171–178 (GDRQTGKT) participates in ATP binding.

This sequence belongs to the ATPase alpha/beta chains family. As to quaternary structure, F-type ATPases have 2 components, CF(1) - the catalytic core - and CF(0) - the membrane proton channel. CF(1) has five subunits: alpha(3), beta(3), gamma(1), delta(1), epsilon(1). CF(0) has four main subunits: a(1), b(1), b'(1) and c(9-12).

The protein localises to the cellular thylakoid membrane. The enzyme catalyses ATP + H2O + 4 H(+)(in) = ADP + phosphate + 5 H(+)(out). Produces ATP from ADP in the presence of a proton gradient across the membrane. The alpha chain is a regulatory subunit. This chain is ATP synthase subunit alpha, found in Trichormus variabilis (strain ATCC 29413 / PCC 7937) (Anabaena variabilis).